Consider the following 417-residue polypeptide: Serine hydroxymethyltransferase (417 aa).

Residues Leu121 and 125-127 each bind (6S)-5,6,7,8-tetrahydrofolate; that span reads GHL. Position 229 is an N6-(pyridoxal phosphate)lysine (Lys229). 355 to 357 is a (6S)-5,6,7,8-tetrahydrofolate binding site; the sequence is SPF.

This sequence belongs to the SHMT family. As to quaternary structure, homodimer. Pyridoxal 5'-phosphate is required as a cofactor.

The protein localises to the cytoplasm. It catalyses the reaction (6R)-5,10-methylene-5,6,7,8-tetrahydrofolate + glycine + H2O = (6S)-5,6,7,8-tetrahydrofolate + L-serine. It functions in the pathway one-carbon metabolism; tetrahydrofolate interconversion. Its pathway is amino-acid biosynthesis; glycine biosynthesis; glycine from L-serine: step 1/1. In terms of biological role, catalyzes the reversible interconversion of serine and glycine with tetrahydrofolate (THF) serving as the one-carbon carrier. This reaction serves as the major source of one-carbon groups required for the biosynthesis of purines, thymidylate, methionine, and other important biomolecules. Also exhibits THF-independent aldolase activity toward beta-hydroxyamino acids, producing glycine and aldehydes, via a retro-aldol mechanism. The polypeptide is Serine hydroxymethyltransferase (Buchnera aphidicola subsp. Acyrthosiphon pisum (strain 5A)).